We begin with the raw amino-acid sequence, 263 residues long: Small ribosomal subunit protein uS2 (263 aa).

S2 is subject to N-acetylserine. Residues 211–242 (EQTAEEEAEAAEGAEFEVEEEEVEQEWQEPAE) show a composition bias toward acidic residues. The tract at residues 211–263 (EQTAEEEAEAAEGAEFEVEEEEVEQEWQEPAEADWNASAPPADWNDAANAEAF) is disordered. Over residues 246–263 (NASAPPADWNDAANAEAF) the composition is skewed to low complexity.

It belongs to the universal ribosomal protein uS2 family. As to quaternary structure, component of the small ribosomal subunit. Mature ribosomes consist of a small (40S) and a large (60S) subunit. The 40S subunit contains about 33 different proteins and 1 molecule of RNA (18S). The 60S subunit contains about 49 different proteins and 3 molecules of RNA (25S, 5.8S and 5S). Interacts with RPS21.

The protein localises to the cytoplasm. Its function is as follows. Required for the assembly and/or stability of the 40S ribosomal subunit. Required for the processing of the 20S rRNA-precursor to mature 18S rRNA in a late step of the maturation of 40S ribosomal subunits. This Komagataella phaffii (strain GS115 / ATCC 20864) (Yeast) protein is Small ribosomal subunit protein uS2.